A 387-amino-acid polypeptide reads, in one-letter code: 1-deoxy-D-xylulose 5-phosphate reductoisomerase (387 aa).

Residues Thr11, Gly12, Ser13, Ile14, Gly37, Arg38, Gln39, and Asn127 each contribute to the NADPH site. Lys128 lines the 1-deoxy-D-xylulose 5-phosphate pocket. Position 129 (Glu129) interacts with NADPH. Asp153 is a binding site for Mn(2+). Ser154, Glu155, Ser179, and His200 together coordinate 1-deoxy-D-xylulose 5-phosphate. Glu155 contributes to the Mn(2+) binding site. An NADPH-binding site is contributed by Gly206. 1-deoxy-D-xylulose 5-phosphate-binding residues include Ser213, Asn218, Lys219, and Glu222. Glu222 is a binding site for Mn(2+).

The protein belongs to the DXR family. It depends on Mg(2+) as a cofactor. Mn(2+) is required as a cofactor.

The enzyme catalyses 2-C-methyl-D-erythritol 4-phosphate + NADP(+) = 1-deoxy-D-xylulose 5-phosphate + NADPH + H(+). The protein operates within isoprenoid biosynthesis; isopentenyl diphosphate biosynthesis via DXP pathway; isopentenyl diphosphate from 1-deoxy-D-xylulose 5-phosphate: step 1/6. In terms of biological role, catalyzes the NADPH-dependent rearrangement and reduction of 1-deoxy-D-xylulose-5-phosphate (DXP) to 2-C-methyl-D-erythritol 4-phosphate (MEP). The protein is 1-deoxy-D-xylulose 5-phosphate reductoisomerase of Symbiobacterium thermophilum (strain DSM 24528 / JCM 14929 / IAM 14863 / T).